Reading from the N-terminus, the 306-residue chain is Porphobilinogen deaminase (306 aa).

Residue Cys240 is modified to S-(dipyrrolylmethanemethyl)cysteine.

This sequence belongs to the HMBS family. As to quaternary structure, monomer. It depends on dipyrromethane as a cofactor.

The catalysed reaction is 4 porphobilinogen + H2O = hydroxymethylbilane + 4 NH4(+). It participates in porphyrin-containing compound metabolism; protoporphyrin-IX biosynthesis; coproporphyrinogen-III from 5-aminolevulinate: step 2/4. Tetrapolymerization of the monopyrrole PBG into the hydroxymethylbilane pre-uroporphyrinogen in several discrete steps. The chain is Porphobilinogen deaminase from Syntrophomonas wolfei subsp. wolfei (strain DSM 2245B / Goettingen).